We begin with the raw amino-acid sequence, 292 residues long: MSVGLKVSAFLHPTLALSSRDVSLSSSSSSLYLDRKILRPGSGRRWCKSRRTEPILAVVESSRVPELDSSSEPVQVFDGSTRLYISYTCPFAQRAWIARNYKGLQNKIELVPIDLKNRPAWYKEKVYSANKVPALEHNNRVLGESLDLIKYIDTNFEGPSLTPDGLEKQVVADELLSYTDSFSKAVRSTLNGTDTNAADVAFDYIEQALSKFNEGPFFLGQFSLVDVAYAPFIERFRLILSDVMNVDITSGRPNLALWIQEMNKIEAYTETRQDPQELVERYKRRVQAEARL.

A chloroplast-targeting transit peptide spans 1 to 56 (MSVGLKVSAFLHPTLALSSRDVSLSSSSSSLYLDRKILRPGSGRRWCKSRRTEPIL). Residues 79–160 (GSTRLYISYT…YIDTNFEGPS (82 aa)) form the GST N-terminal domain. Residues 89–90 (CP), 117–118 (NR), 131–132 (KV), and 144–145 (ES) each bind glutathione. Positions 130–286 (NKVPALEHNN…ELVERYKRRV (157 aa)) constitute a GST C-terminal domain.

The protein belongs to the GST superfamily. Lambda family.

It is found in the plastid. It localises to the chloroplast. It carries out the reaction RX + glutathione = an S-substituted glutathione + a halide anion + H(+). Functionally, catalyzes the glutathione-dependent reduction of S-glutathionylquercetin to quercetin. In vitro, possesses glutathione-dependent thiol transferase activity toward 2-hydroxyethyl disulfide (HED). The sequence is that of Glutathione S-transferase L2, chloroplastic (GSTL2) from Arabidopsis thaliana (Mouse-ear cress).